Consider the following 269-residue polypeptide: Formamidopyrimidine-DNA glycosylase (269 aa).

Catalysis depends on proline 2, which acts as the Schiff-base intermediate with DNA. Glutamate 3 functions as the Proton donor in the catalytic mechanism. Lysine 57 (proton donor; for beta-elimination activity) is an active-site residue. DNA-binding residues include histidine 90, arginine 109, and lysine 150. An FPG-type zinc finger spans residues 235–269 (QVYGRKGEPCRVCGTPIVATKHAQRATFYCRQCQK). Catalysis depends on arginine 259, which acts as the Proton donor; for delta-elimination activity.

It belongs to the FPG family. In terms of assembly, monomer. The cofactor is Zn(2+).

The enzyme catalyses Hydrolysis of DNA containing ring-opened 7-methylguanine residues, releasing 2,6-diamino-4-hydroxy-5-(N-methyl)formamidopyrimidine.. The catalysed reaction is 2'-deoxyribonucleotide-(2'-deoxyribose 5'-phosphate)-2'-deoxyribonucleotide-DNA = a 3'-end 2'-deoxyribonucleotide-(2,3-dehydro-2,3-deoxyribose 5'-phosphate)-DNA + a 5'-end 5'-phospho-2'-deoxyribonucleoside-DNA + H(+). In terms of biological role, involved in base excision repair of DNA damaged by oxidation or by mutagenic agents. Acts as a DNA glycosylase that recognizes and removes damaged bases. Has a preference for oxidized purines, such as 7,8-dihydro-8-oxoguanine (8-oxoG). Has AP (apurinic/apyrimidinic) lyase activity and introduces nicks in the DNA strand. Cleaves the DNA backbone by beta-delta elimination to generate a single-strand break at the site of the removed base with both 3'- and 5'-phosphates. The polypeptide is Formamidopyrimidine-DNA glycosylase (Escherichia coli O6:K15:H31 (strain 536 / UPEC)).